The following is a 213-amino-acid chain: Outer-membrane lipoprotein carrier protein (213 aa).

The N-terminal stretch at 1 to 23 (MKKLLKQSLLGFALVSMTGAAFA) is a signal peptide.

Belongs to the LolA family. In terms of assembly, monomer.

It is found in the periplasm. Its function is as follows. Participates in the translocation of lipoproteins from the inner membrane to the outer membrane. Only forms a complex with a lipoprotein if the residue after the N-terminal Cys is not an aspartate (The Asp acts as a targeting signal to indicate that the lipoprotein should stay in the inner membrane). This is Outer-membrane lipoprotein carrier protein from Actinobacillus pleuropneumoniae serotype 7 (strain AP76).